Consider the following 475-residue polypeptide: Ankyrin repeat, SAM and basic leucine zipper domain-containing protein 1 (475 aa).

The disordered stretch occupies residues 1-25 (MAASALRGLPVAGGGESSESEDDGW). Phosphoserine occurs at positions 17, 18, and 20. ANK repeat units lie at residues 45 to 74 (EKKEKFKKAMTIGDVSLVQELLDSGISVDS), 78 to 107 (YGWTPLMYAASVANAELVRVLLDRGANASF), 110 to 144 (DKQSILITACSAHGSEEQILKCVELLLSRNADPNV), 148 to 177 (RLMTPIMYAARDGHTQVVALLVAHGAEVNT), 181 to 210 (NGYTALTWAARQGHKNIVLKLLELGANKML), and 214 to 243 (DGKMPSEIAKRNKHHEIFNLLSFTLNPLEG). One can recognise an SAM domain in the interval 272–334 (SYTAFGDLEV…KILAALKELQ (63 aa)).

As to quaternary structure, interacts with DDX4, PIWIL1, RANBP9 and TDRD1.

The protein resides in the cytoplasm. Plays a central role during spermatogenesis by repressing transposable elements and preventing their mobilization, which is essential for the germline integrity. Acts via the piRNA metabolic process, which mediates the repression of transposable elements during meiosis by forming complexes composed of piRNAs and Piwi proteins and governs the methylation and subsequent repression of transposons. Its association with pi-bodies suggests a participation in the primary piRNAs metabolic process. Required prior to the pachytene stage to facilitate the production of multiple types of piRNAs, including those associated with repeats involved in the regulation of retrotransposons. May act by mediating protein-protein interactions during germ cell maturation. The chain is Ankyrin repeat, SAM and basic leucine zipper domain-containing protein 1 (ASZ1) from Pan troglodytes (Chimpanzee).